The following is a 70-amino-acid chain: Small ribosomal subunit protein bS21 (70 aa).

Residues 48-61 (KLAAAVKRQSKRLR) are compositionally biased toward basic residues. A disordered region spans residues 48 to 70 (KLAAAVKRQSKRLRSQQLPPKMY).

This sequence belongs to the bacterial ribosomal protein bS21 family.

The polypeptide is Small ribosomal subunit protein bS21 (Thiobacillus denitrificans (strain ATCC 25259 / T1)).